We begin with the raw amino-acid sequence, 573 residues long: Isocitrate dehydrogenase kinase/phosphatase (573 aa).

ATP is bound by residues 317 to 323 and Lys338; that span reads APGVRGM. The active site involves Asp373.

The protein belongs to the AceK family.

Its subcellular location is the cytoplasm. It catalyses the reaction L-seryl-[isocitrate dehydrogenase] + ATP = O-phospho-L-seryl-[isocitrate dehydrogenase] + ADP + H(+). Functionally, bifunctional enzyme which can phosphorylate or dephosphorylate isocitrate dehydrogenase (IDH) on a specific serine residue. This is a regulatory mechanism which enables bacteria to bypass the Krebs cycle via the glyoxylate shunt in response to the source of carbon. When bacteria are grown on glucose, IDH is fully active and unphosphorylated, but when grown on acetate or ethanol, the activity of IDH declines drastically concomitant with its phosphorylation. This chain is Isocitrate dehydrogenase kinase/phosphatase, found in Pseudomonas fluorescens (strain Pf0-1).